The following is a 44-amino-acid chain: Photosystem I reaction center subunit IX (44 aa).

The helical transmembrane segment at 9–29 (FMRSAPIVAAIWISLTAGIII) threads the bilayer.

It belongs to the PsaJ family.

The protein localises to the cellular thylakoid membrane. Its function is as follows. May help in the organization of the PsaE and PsaF subunits. This chain is Photosystem I reaction center subunit IX, found in Prochlorococcus marinus (strain MIT 9515).